A 411-amino-acid polypeptide reads, in one-letter code: MDGLPGRALGAACLLLLVAGWLGPEAWGSPTPPPSPAAPPPPPPPGAPGGSQDTCTSCGGGGGGFRRPEELGRVDGDFLEAVKRHILSRLQLRGRPNITHAVPKAAMVTALRKLHAGKVREDGRVEIPHLDGHASPGADGQERVSEIISFAETDGLASSRVRLYFFVSNEGNQNLFVVQASLWLYLKLLPYVLEKGSRRKVRVKVYFQEQGHGDRWNVVEKKVDLKRSGWHTFPITEAIQALFERGERRLNLDVQCDSCQELAVVPVFVDPGEESHRPFVVVQARLGDSRHRIRKRGLECDGRTSLCCRQQFFIDFRLIGWNDWIIAPTGYYGNYCEGSCPAYLAGVPGSASSFHTAVVNQYRMRGLNPGPVNSCCIPTKLSSMSMLYFDDEYNIVKRDVPNMIVEECGCA.

An N-terminal signal peptide occupies residues 1–28; the sequence is MDGLPGRALGAACLLLLVAGWLGPEAWG. Residues 28–69 are disordered; that stretch reads GSPTPPPSPAAPPPPPPPGAPGGSQDTCTSCGGGGGGFRRPE. Positions 29–296 are excised as a propeptide; that stretch reads SPTPPPSPAA…GDSRHRIRKR (268 aa). Over residues 30–47 the composition is skewed to pro residues; sequence PTPPPSPAAPPPPPPPGA. A glycan (N-linked (GlcNAc...) asparagine) is linked at asparagine 97. 4 cysteine pairs are disulfide-bonded: cysteine 300–cysteine 308, cysteine 307–cysteine 376, cysteine 336–cysteine 408, and cysteine 340–cysteine 410.

The protein belongs to the TGF-beta family. As to quaternary structure, dimeric, linked by one or more disulfide bonds. Inhibin B is a dimer of alpha and beta-B. Activin B is a homodimer of beta-B. Activin AB is a dimer of beta-A and beta-B. Interacts with FST and FSTL3. Activin B interacts with BMPR2. As to expression, uterus, testis, ovary, lung, kidney, brain, CJ7 embryonic stem cells, and possibly in liver.

The protein localises to the secreted. Functionally, inhibins and activins inhibit and activate, respectively, the secretion of follitropin by the pituitary gland. Inhibins/activins are involved in regulating a number of diverse functions such as hypothalamic and pituitary hormone secretion, gonadal hormone secretion, germ cell development and maturation, erythroid differentiation, insulin secretion, nerve cell survival, embryonic axial development or bone growth, depending on their subunit composition. Inhibins appear to oppose the functions of activins. Its function is as follows. Activin B is a dimer of alpha and beta-B that plays a role in several essential biological processes including embryonic development, stem cell maintenance and differentiation, haematopoiesis, cell proliferation and wound healing. Signals through type I receptor ACVR1C, abundantly expressed in pancreatic beta cells, and type II receptors like ACVR2A. Upon ligand binding, these receptors phosphorylate intracellular signaling mediators SMAD2 and SMAD3, which form a complex with SMAD4, translocate to the nucleus, and regulate gene expression. Plays a crucial role in the induction of hepcidin by inflammation through activation of ACVR1C and subsequent phosphorylation of SMAD1/5/8. Regulates adipocyte lipid metabolism by decreasing non-esterified fatty acids and glycerol release and increases intracellular triglyceride content. Stimulates wound healing by promoting cell migration and hair follicle regeneration through the JNK and ERK signaling pathways downstream of RHOA. In terms of biological role, inhibin B is a dimer of alpha and beta-B that plays a crucial role in the regulation of the reproductive system by inhibiting the secretion of follicle-stimulating hormone (FSH) from the anterior pituitary gland. Thereby, maintains reproductive homeostasis in both males and females. Acts as a more potent suppressor of FSH release than inhibin A. Functions as competitive receptor antagonist binding activin type II receptors with high affinity in the presence of the TGF-beta type III coreceptor/TGFBR3L. In Mus musculus (Mouse), this protein is Inhibin beta B chain (Inhbb).